We begin with the raw amino-acid sequence, 181 residues long: SAGA-associated factor 11 (181 aa).

The SGF11-type zinc finger occupies F93 to C114. The segment covering G116–T125 has biased composition (basic residues). Residues G116–D181 are disordered. Positions T126–S153 are enriched in low complexity.

It belongs to the SGF11 family. As to quaternary structure, component of a deubiquitination module (DUB module) formed by ENY2, SGF11, and UBP22 in Arabidopsis. Interacts directly with ENY2 and UBP22. Interacts with DDA1. Post-translationally, ubiquitinated in DET1-dependent manner. Ubiquitination probably leads to its subsequent proteasomal degradation.

Its subcellular location is the nucleus. The protein localises to the nucleoplasm. Functionally, component of a deubiquitination module (DUB module) that specifically deubiquinates monoubiquinated histone H2B (H2Bub). Does not seem to be a component of the TREX-2 complex. Seems to act independently of the SAGA multiprotein complex. The DUB module is responsible for the major H2Bub deubiquitinase activity in Arabidopsis. The polypeptide is SAGA-associated factor 11 (Arabidopsis thaliana (Mouse-ear cress)).